The sequence spans 337 residues: tRNA N6-adenosine threonylcarbamoyltransferase (337 aa).

The Fe cation site is built by histidine 111 and histidine 115. Substrate-binding positions include 134–138, aspartate 167, glycine 180, and asparagine 272; that span reads LVSGG. Residue aspartate 300 participates in Fe cation binding.

The protein belongs to the KAE1 / TsaD family. Fe(2+) serves as cofactor.

It localises to the cytoplasm. The enzyme catalyses L-threonylcarbamoyladenylate + adenosine(37) in tRNA = N(6)-L-threonylcarbamoyladenosine(37) in tRNA + AMP + H(+). Required for the formation of a threonylcarbamoyl group on adenosine at position 37 (t(6)A37) in tRNAs that read codons beginning with adenine. Is involved in the transfer of the threonylcarbamoyl moiety of threonylcarbamoyl-AMP (TC-AMP) to the N6 group of A37, together with TsaE and TsaB. TsaD likely plays a direct catalytic role in this reaction. This chain is tRNA N6-adenosine threonylcarbamoyltransferase, found in Shewanella amazonensis (strain ATCC BAA-1098 / SB2B).